A 2514-amino-acid polypeptide reads, in one-letter code: Polyprotein P1234 (2514 aa).

The region spanning 28 to 259 is the Alphavirus-like MT domain; it reads EPKQVTPNDH…ESRKLLQSWH (232 aa). The nsP1 membrane-binding stretch occupies residues 244-263; the sequence is GSTLYPESRKLLQSWHLPSV. Residues C417 and C419 are each lipidated (S-palmitoyl cysteine; by host). Residues 690-842 form the (+)RNA virus helicase ATP-binding domain; it reads DLTSPPYHEF…HNICTQVYHK (153 aa). 721 to 728 contributes to the a ribonucleoside 5'-triphosphate binding site; it reads GVPGSGKS. The (+)RNA virus helicase C-terminal domain occupies 843–991; it reads SISRRCTLPV…IKEWEAEHAS (149 aa). Residues 1004–1327 form the Peptidase C9 domain; sequence DTFQNKANVC…NQLNAVYAGL (324 aa). Positions 1005 to 1024 are nucleolus localization signal; the sequence is TFQNKANVCWAKCLVPILDT. The For cysteine protease nsP2 activity role is filled by C1013. Residues 1058–1067 carry the Nuclear export signal motif; the sequence is TRIYGVDLDS. The active-site For cysteine protease nsP2 activity is H1083. The Nuclear localization signal motif lies at 1182–1186; the sequence is PTKRV. The region spanning 1334 to 1493 is the Macro domain; it reads APSYRVKRMD…KITEAISLRS (160 aa). D1343, N1357, G1365, G1445, V1446, and Y1447 together coordinate ADP-D-ribose. Residues C1595, C1597, C1620, and C1638 each contribute to the Zn(2+) site. 2 short sequence motifs (FGDF; binding to host G3BP1) span residues 1852–1855 and 1870–1873; these read FGDF. Residues 2268 to 2383 form the RdRp catalytic domain; sequence DAVLETDIAS…HGVVSDALMA (116 aa).

Interacts with non-structural protein 3. Interacts with RNA-directed RNA polymerase nsP4. Interacts with protease nsP2. interacts with itself. In terms of assembly, interacts with mRNA-capping enzyme nsP1. Interacts with host DDX1. Interacts with host DDX3. Interacts (via C-terminus) with host G3BP1; this interaction inhibits the formation of host stress granules on viral mRNAs and the nsp3-G3BP1 complexes bind viral RNAs and probably orchestrate the assembly of viral replication complexes. Interacts (via C-terminus) with host G3BP2; this interaction inhibits the formation of host stress granules on viral mRNAs and the nsp3-G3BP2 complexes bind viral RNAs and probably orchestrate the assembly of viral replication complexes. As to quaternary structure, interacts with mRNA-capping enzyme nsP1. Interacts with protease nsP2. interacts with itself. Interacts with RNA-directed RNA polymerase nsP4. Interacts with mRNA-capping enzyme nsP1. Interacts with KPNA1/karyopherin-alpha1; this interaction probably allows the active transport of protease nsP2 into the host nucleus. It depends on Mg(2+) as a cofactor. Requires Mn(2+) as cofactor. Specific enzymatic cleavages in vivo yield mature proteins. The processing of the polyprotein is temporally regulated. In early stages (1.7 hpi), P1234 is first cleaved in trans through its nsP2 protease activity, releasing P123 and nsP4, which associate to form the early replication complex. At the same time, P1234 is also cut at the nsP1/nsP2 site early in infection but with lower efficiency. After replication of the viral minus-strand RNAs (4 hpi), the polyproteins are cut at the nsP1/nsP2 and nsP2/nsP3 sites very efficiently, preventing accumulation of P123 and P1234 and allowing the formation of the late replication complex. NsP3/nsP4 site is not cleaved anymore and P34 is produced rather than nsP4. In terms of processing, specific enzymatic cleavages in vivo yield mature proteins. The processing of the polyprotein is temporally regulated. In early stages (1.7 hpi), P123 is cleaved at the nsP1/nsP2 site with low efficiency. After replication of the viral minus-strand RNAs (4 hpi), the polyproteins are cut at the nsP1/nsP2 and nsP2/nsP3 sites very efficiently, preventing accumulation of P123 and allowing the formation of the late replication complex. Post-translationally, palmitoylated by host palmitoyltransferases ZDHHC2 and ZDHHC19. Phosphorylated by host on serines and threonines. In terms of processing, ubiquitinated; targets the protein for rapid degradation via the ubiquitin system. Nsp4 is present in extremely low quantities due to low frequency of translation through the amber stop-codon and the degradation by the ubiquitin pathway.

It localises to the host cytoplasmic vesicle membrane. Its subcellular location is the host cell membrane. The protein localises to the host cell projection. It is found in the host filopodium. The protein resides in the host nucleus. It localises to the host cytoplasm. It catalyses the reaction GTP + S-adenosyl-L-methionine = N(7)-methyl-GTP + S-adenosyl-L-homocysteine. The enzyme catalyses N(7)-methyl-GTP + L-histidyl-[protein] = N(tele)-(N(7)-methylguanosine 5'-phospho)-L-histidyl-[protein] + diphosphate. The catalysed reaction is N(tele)-(N(7)-methylguanosine 5'-phospho)-L-histidyl-[protein] + a 5'-end diphospho-(purine-ribonucleoside) in mRNA + H(+) = a 5'-end (N(7)-methyl 5'-triphosphoguanosine)-(purine-ribonucleoside) in mRNA + L-histidyl-[protein]. It carries out the reaction a 5'-end triphospho-ribonucleoside in mRNA + H2O = a 5'-end diphospho-ribonucleoside in mRNA + phosphate + H(+). It catalyses the reaction a ribonucleoside 5'-triphosphate + H2O = a ribonucleoside 5'-diphosphate + phosphate + H(+). The enzyme catalyses ATP + H2O = ADP + phosphate + H(+). The catalysed reaction is RNA(n) + a ribonucleoside 5'-triphosphate = RNA(n+1) + diphosphate. It carries out the reaction 4-O-(ADP-D-ribosyl)-L-aspartyl-[protein] + H2O = L-aspartyl-[protein] + ADP-D-ribose + H(+). It catalyses the reaction 5-O-(ADP-D-ribosyl)-L-glutamyl-[protein] + H2O = L-glutamyl-[protein] + ADP-D-ribose + H(+). The enzyme catalyses RNA(n) + ATP = RNA(n)-3'-adenine ribonucleotide + diphosphate. The catalysed reaction is ADP-alpha-D-ribose 1''-phosphate + H2O = ADP-D-ribose + phosphate. Functionally, inactive precursor of the viral replicase, which is activated by cleavages carried out by the viral protease nsP2. Its function is as follows. The early replication complex formed by the polyprotein P123 and nsP4 synthesizes minus-strand RNAs. As soon P123 is cleaved into mature proteins, the plus-strand RNAs synthesis begins. Cytoplasmic capping enzyme that catalyzes two virus-specific reactions: methyltransferase and nsP1 guanylyltransferase. mRNA-capping is necessary since all viral RNAs are synthesized in the cytoplasm, and host capping enzymes are restricted to the nucleus. The enzymatic reaction involves a covalent link between 7-methyl-GMP and nsP1, whereas eukaryotic capping enzymes form a covalent complex only with GMP. nsP1 capping consists in the following reactions: GTP is first methylated into 7-methyl-GMP and then is covalently linked to nsP1 to form the m7GMp-nsP1 complex from which 7-methyl-GMP complex is transferred to the mRNA to create the cap structure. NsP1 is also needed for the initiation of the minus-strand RNAs synthesis. Probably serves as a membrane anchor for the replication complex composed of nsP1-nsP4. Palmitoylated nsP1 is remodeling host cell cytoskeleton, and induces filopodium-like structure formation at the surface of the host cell. In terms of biological role, multifunctional protein whose N-terminus is part of the RNA polymerase complex and displays NTPase, RNA triphosphatase and helicase activities. NTPase and RNA triphosphatase are involved in viral RNA capping and helicase keeps a check on the dsRNA replication intermediates. The C-terminus harbors a protease that specifically cleaves the polyproteins and releases the mature proteins. Required for the shutoff of minus-strand RNAs synthesis. Specifically inhibits the host IFN response by promoting the nuclear export of host STAT1. Also inhibits host transcription by inducing the rapid proteasome-dependent degradation of POLR2A, a catalytic subunit of the RNAPII complex. The resulting inhibition of cellular protein synthesis serves to ensure maximal viral gene expression and to evade host immune response. Functionally, seems to be essential for minus-strand RNAs and subgenomic 26S mRNAs synthesis. Displays mono-ADP-ribosylhydrolase activity. ADP-ribosylation is a post-translational modification that controls various processes of the host cell and the virus probably needs to revert it for optimal viral replication. Binds proteins of G3BP family and sequesters them into the viral RNA replication complexes thereby inhibiting the formation of host stress granules on viral mRNAs. The nsp3-G3BP complexes bind viral RNAs and probably orchestrate the assembly of viral replication complexes, thanks to the ability of G3BP family members to self-assemble and bind DNA. Its function is as follows. RNA dependent RNA polymerase. Replicates genomic and antigenomic RNA by recognizing replications specific signals. The early replication complex formed by the polyprotein P123 and nsP4 synthesizes minus-strand RNAs. The late replication complex composed of fully processed nsP1-nsP4 is responsible for the production of genomic and subgenomic plus-strand RNAs. The sequence is that of Polyprotein P1234 from O'nyong-nyong virus (strain Gulu) (ONNV).